The sequence spans 417 residues: Lissencephaly-1 homolog (417 aa).

Positions 7–39 constitute a LisH domain; that stretch reads QKEELNGAILDYFDSSGYKLTSTEFTKETNIEL. A coiled-coil region spans residues 52–80; that stretch reads TSVIRLQKKVMDLEAKVSQLEEELNNGGR. The interval 72 to 93 is disordered; sequence EEELNNGGRGPARRGKEDALPR. WD repeat units follow at residues 102-143, 144-185, 186-225, 228-267, 270-339, 342-383, and 385-417; these read GHRN…RTLK, GHTN…KTLH, GHDH…CTKT, GHED…CLLT, EHSH…CLQT, GHDN…KTIN, and AHSH…WKLG.

The protein belongs to the WD repeat LIS1/nudF family.

Its subcellular location is the cytoplasm. It is found in the cytoskeleton. The protein resides in the microtubule organizing center. The protein localises to the centrosome. In terms of biological role, positively regulates the activity of the minus-end directed microtubule motor protein dynein. May enhance dynein-mediated microtubule sliding by targeting dynein to the microtubule plus end. Required for several dynein- and microtubule-dependent processes. The sequence is that of Lissencephaly-1 homolog from Heterostelium pallidum (strain ATCC 26659 / Pp 5 / PN500) (Cellular slime mold).